We begin with the raw amino-acid sequence, 350 residues long: MFS transporter OpS2 (350 aa).

8 consecutive transmembrane segments (helical) span residues 3 to 23 (FLAGGASASVAAVGAGTVADL), 34 to 54 (GYFFLGPMLGPLVSPIIGGIL), 65 to 85 (WGAVVYGGLVWLSMIFLLPET), 141 to 161 (FMTCYYASISFACYYILNLAI), 174 to 194 (AIILGLLYIPSALGSIVASVV), 227 to 247 (MCENAWIPAFVFPAALLVFGW), 253 to 273 (IFWFAPIVVTFFFGLGNSLIF), and 312 to 332 (PLLGAIGTQWLFTGLAVICWA).

This sequence belongs to the major facilitator superfamily.

The protein resides in the cell membrane. MFS transporter; part of the gene cluster that mediates the biosynthesis of the bibenzoquinone oosporein, a metabolite required for fungal virulence that acts by evading host immunity to facilitate fungal multiplication in insects. The function of this putative MFS transporter remains unclear since its deletion leads to increased oosporein production. The protein is MFS transporter OpS2 of Beauveria bassiana (strain ARSEF 2860) (White muscardine disease fungus).